Reading from the N-terminus, the 263-residue chain is Tryptophan synthase alpha chain (263 aa).

Active-site proton acceptor residues include glutamate 46 and aspartate 57.

This sequence belongs to the TrpA family. As to quaternary structure, tetramer of two alpha and two beta chains.

The catalysed reaction is (1S,2R)-1-C-(indol-3-yl)glycerol 3-phosphate + L-serine = D-glyceraldehyde 3-phosphate + L-tryptophan + H2O. The protein operates within amino-acid biosynthesis; L-tryptophan biosynthesis; L-tryptophan from chorismate: step 5/5. In terms of biological role, the alpha subunit is responsible for the aldol cleavage of indoleglycerol phosphate to indole and glyceraldehyde 3-phosphate. This chain is Tryptophan synthase alpha chain, found in Bacteroides fragilis (strain ATCC 25285 / DSM 2151 / CCUG 4856 / JCM 11019 / LMG 10263 / NCTC 9343 / Onslow / VPI 2553 / EN-2).